The chain runs to 344 residues: Dihydroorotase (344 aa).

Residues H13 and H15 each coordinate Zn(2+). Substrate-binding positions include 15–17 (HFR) and N41. Positions 98, 135, and 173 each coordinate Zn(2+). Residue K98 is modified to N6-carboxylysine. H135 is a binding site for substrate. L218 contacts substrate. D246 provides a ligand contact to Zn(2+). D246 is a catalytic residue. Substrate-binding residues include H250 and A262.

Belongs to the metallo-dependent hydrolases superfamily. DHOase family. Class II DHOase subfamily. In terms of assembly, homodimer. Zn(2+) is required as a cofactor.

It carries out the reaction (S)-dihydroorotate + H2O = N-carbamoyl-L-aspartate + H(+). It functions in the pathway pyrimidine metabolism; UMP biosynthesis via de novo pathway; (S)-dihydroorotate from bicarbonate: step 3/3. Catalyzes the reversible cyclization of carbamoyl aspartate to dihydroorotate. The polypeptide is Dihydroorotase (Shewanella sediminis (strain HAW-EB3)).